The chain runs to 207 residues: Large ribosomal subunit protein uL4 (207 aa).

A disordered region spans residues 44–78 (MRQGTHKTKNRAEVSGGGRKPWRQKGTGRARQGSI).

The protein belongs to the universal ribosomal protein uL4 family. As to quaternary structure, part of the 50S ribosomal subunit.

In terms of biological role, one of the primary rRNA binding proteins, this protein initially binds near the 5'-end of the 23S rRNA. It is important during the early stages of 50S assembly. It makes multiple contacts with different domains of the 23S rRNA in the assembled 50S subunit and ribosome. This protein when expressed in E.coli represses the endogenous S10 operon; this may not occur in B.stearothermophilus however. Functionally, forms part of the polypeptide exit tunnel. The polypeptide is Large ribosomal subunit protein uL4 (rplD) (Geobacillus stearothermophilus (Bacillus stearothermophilus)).